Reading from the N-terminus, the 488-residue chain is Protein nucleotidyltransferase YdiU (488 aa).

Residues Gly91, Gly93, Arg94, Lys114, Asp126, Gly127, Arg177, and Arg184 each coordinate ATP. Residue Asp253 is the Proton acceptor of the active site. 2 residues coordinate Mg(2+): Asn254 and Asp263. ATP is bound at residue Asp263.

It belongs to the SELO family. Requires Mg(2+) as cofactor. Mn(2+) serves as cofactor.

It catalyses the reaction L-seryl-[protein] + ATP = 3-O-(5'-adenylyl)-L-seryl-[protein] + diphosphate. The enzyme catalyses L-threonyl-[protein] + ATP = 3-O-(5'-adenylyl)-L-threonyl-[protein] + diphosphate. The catalysed reaction is L-tyrosyl-[protein] + ATP = O-(5'-adenylyl)-L-tyrosyl-[protein] + diphosphate. It carries out the reaction L-histidyl-[protein] + UTP = N(tele)-(5'-uridylyl)-L-histidyl-[protein] + diphosphate. It catalyses the reaction L-seryl-[protein] + UTP = O-(5'-uridylyl)-L-seryl-[protein] + diphosphate. The enzyme catalyses L-tyrosyl-[protein] + UTP = O-(5'-uridylyl)-L-tyrosyl-[protein] + diphosphate. Functionally, nucleotidyltransferase involved in the post-translational modification of proteins. It can catalyze the addition of adenosine monophosphate (AMP) or uridine monophosphate (UMP) to a protein, resulting in modifications known as AMPylation and UMPylation. This chain is Protein nucleotidyltransferase YdiU, found in Bacillus mycoides (strain KBAB4) (Bacillus weihenstephanensis).